Consider the following 270-residue polypeptide: tRNA pseudouridine synthase A (270 aa).

The Nucleophile role is filled by aspartate 60. Positions 107-111 (FHARF) are RNA binding. Substrate is bound at residue tyrosine 118. An interaction with tRNA region spans residues 168–172 (QCQSR).

This sequence belongs to the tRNA pseudouridine synthase TruA family. Homodimer.

It carries out the reaction uridine(38/39/40) in tRNA = pseudouridine(38/39/40) in tRNA. Its function is as follows. Formation of pseudouridine at positions 38, 39 and 40 in the anticodon stem and loop of transfer RNAs. The chain is tRNA pseudouridine synthase A from Escherichia coli O139:H28 (strain E24377A / ETEC).